Here is a 125-residue protein sequence, read N- to C-terminus: Glycine cleavage system H protein (125 aa).

The 83-residue stretch at Val-23 to Arg-105 folds into the Lipoyl-binding domain. Lys-64 is modified (N6-lipoyllysine).

This sequence belongs to the GcvH family. As to quaternary structure, the glycine cleavage system is composed of four proteins: P, T, L and H. It depends on (R)-lipoate as a cofactor.

The glycine cleavage system catalyzes the degradation of glycine. The H protein shuttles the methylamine group of glycine from the P protein to the T protein. The protein is Glycine cleavage system H protein of Streptomyces coelicolor (strain ATCC BAA-471 / A3(2) / M145).